The chain runs to 562 residues: Tripeptidyl-peptidase 1 (562 aa).

An N-terminal signal peptide occupies residues 1–19 (MGLQARLLGLLALVIAGKC). The propeptide at 20 to 194 (TYNPEPDQRW…PEPQQVGTVS (175 aa)) is removed in mature form. An intrachain disulfide couples Cys111 to Cys122. Residues 198-562 (GVTPSVLRQR…PALLKTLLNP (365 aa)) enclose the Peptidase S53 domain. Asn209 carries N-linked (GlcNAc...) asparagine glycosylation. The N-linked (GlcNAc...) (high mannose) asparagine glycan is linked to Asn221. Residues Glu271 and Asp275 each act as charge relay system in the active site. Asn285, Asn312, and Asn442 each carry an N-linked (GlcNAc...) asparagine glycan. Intrachain disulfides connect Cys364/Cys525 and Cys521/Cys536. Ser474 serves as the catalytic Charge relay system. Ca(2+)-binding residues include Asp516 and Val517. Ca(2+) is bound by residues Gly538, Gly540, and Asp542.

As to quaternary structure, monomer. Interacts with CLN5. Interacts with CLN3. Ca(2+) serves as cofactor. Post-translationally, activated by autocatalytic proteolytical processing upon acidification. N-glycosylation is required for processing and activity.

The protein resides in the lysosome. The protein localises to the melanosome. It catalyses the reaction Release of an N-terminal tripeptide from a polypeptide, but also has endopeptidase activity.. Functionally, lysosomal serine protease with tripeptidyl-peptidase I activity. May act as a non-specific lysosomal peptidase which generates tripeptides from the breakdown products produced by lysosomal proteinases. Requires substrates with an unsubstituted N-terminus. The protein is Tripeptidyl-peptidase 1 (Tpp1) of Mus musculus (Mouse).